The chain runs to 288 residues: HTH-type transcriptional regulator YofA (288 aa).

The 58-residue stretch at 1 to 58 (MESGDLKIFQAVARKGSISKAAESLHYVQSNVTNRIQQLERQLQTQLFYRTNRGMTLT) folds into the HTH lysR-type domain. The H-T-H motif DNA-binding region spans 18-37 (ISKAAESLHYVQSNVTNRIQ).

Belongs to the LysR transcriptional regulatory family.

It is found in the cytoplasm. In terms of biological role, regulates expression of the cell division protein ftsW, and is essential for cell viability during stationary phase. This Bacillus velezensis (strain DSM 23117 / BGSC 10A6 / LMG 26770 / FZB42) (Bacillus amyloliquefaciens subsp. plantarum) protein is HTH-type transcriptional regulator YofA (yofA).